An 83-amino-acid polypeptide reads, in one-letter code: MSSGGLLLLLGLLTLREGLTPVSSKDRPDFCELPDDRGPCRGIFHAFYYNPDQRQCLEFIYGGCYGNANNFKTIDECKRTCAA.

A signal peptide spans 1 to 24; the sequence is MSSGGLLLLLGLLTLREGLTPVSS. Positions 31-81 constitute a BPTI/Kunitz inhibitor domain; it reads CELPDDRGPCRGIFHAFYYNPDQRQCLEFIYGGCYGNANNFKTIDECKRTC. Intrachain disulfides connect Cys-31–Cys-81, Cys-40–Cys-64, and Cys-56–Cys-77.

The protein resides in the secreted. In terms of biological role, serine protease inhibitor. The chain is Blackelin-4 from Pseudechis porphyriacus (Red-bellied black snake).